Reading from the N-terminus, the 319-residue chain is MTGDRPWHGQCSLQLISKTATDDLQSQLTVHQSQCTAPFKIQRANLDHDGRCQLPLLHTAGGLVGGDQLSVNVKAGADSRGLVTSVAAQKVYGSVGRSKQHPKGRWASQECHFELETNADLEWLPQELVVFQGGLYKQRMQVELQPKASFLCAEVVRLGRTAAGETLNEGAWRSSLEICRQTPIGRQWELVDQLELNSEVLQSLHGMGTQPVFGSFVWAAPHPLTADVMEILLRNCRTDRANLEGSMACGGLDQGLVARYIGPSSQAARQWFSRLWARTRQLRRLSTPQPPREWPLQEEGTFSNERFTKDHQSPSASPH.

A disordered region spans residues 284-319 (RLSTPQPPREWPLQEEGTFSNERFTKDHQSPSASPH).

This sequence belongs to the UreD family. As to quaternary structure, ureD, UreF and UreG form a complex that acts as a GTP-hydrolysis-dependent molecular chaperone, activating the urease apoprotein by helping to assemble the nickel containing metallocenter of UreC. The UreE protein probably delivers the nickel.

The protein resides in the cytoplasm. Required for maturation of urease via the functional incorporation of the urease nickel metallocenter. The polypeptide is Urease accessory protein UreD (Prochlorococcus marinus (strain MIT 9313)).